The following is a 325-amino-acid chain: UPF0285 protein MmarC7_1666 (325 aa).

This sequence belongs to the UPF0285 family.

This Methanococcus maripaludis (strain C7 / ATCC BAA-1331) protein is UPF0285 protein MmarC7_1666.